The primary structure comprises 485 residues: Rhamnulokinase (485 aa).

10 to 14 is a binding site for ATP; sequence ASSGR. Substrate contacts are provided by residues Ala78 and 233–235; that span reads HDT. Asp234 functions as the Proton acceptor in the catalytic mechanism. An ATP-binding site is contributed by Thr256. Asn293 is a substrate binding site. Gln301 contributes to the ATP binding site. An intrachain disulfide couples Cys351 to Cys368. Position 400 (Gly400) interacts with ATP.

The protein belongs to the rhamnulokinase family. Mg(2+) is required as a cofactor.

It carries out the reaction L-rhamnulose + ATP = L-rhamnulose 1-phosphate + ADP + H(+). It participates in carbohydrate degradation; L-rhamnose degradation; glycerone phosphate from L-rhamnose: step 2/3. Involved in the catabolism of L-rhamnose (6-deoxy-L-mannose). Catalyzes the transfer of the gamma-phosphate group from ATP to the 1-hydroxyl group of L-rhamnulose to yield L-rhamnulose 1-phosphate. The sequence is that of Rhamnulokinase from Bacillus subtilis (strain 168).